A 133-amino-acid chain; its full sequence is Large ribosomal subunit protein bL17 (133 aa).

Belongs to the bacterial ribosomal protein bL17 family. As to quaternary structure, part of the 50S ribosomal subunit. Contacts protein L32.

This Pseudoalteromonas translucida (strain TAC 125) protein is Large ribosomal subunit protein bL17.